Reading from the N-terminus, the 246-residue chain is Probable maleylacetoacetate isomerase 1 (246 aa).

Residues 32 to 116 (TKPILYSYWP…YLEETRPQPA (85 aa)) form the GST N-terminal domain. Residues 42–47 (SSCSWR), V88, 100–101 (DS), Q140, and 144–146 (NVS) each bind glutathione. One can recognise a GST C-terminal domain in the interval 121–241 (DPVKRAKIRE…HPSTQPDCPP (121 aa)).

Belongs to the GST superfamily. Zeta family. Glutathione is required as a cofactor.

The protein resides in the cytoplasm. It catalyses the reaction 4-maleylacetoacetate = 4-fumarylacetoacetate. The catalysed reaction is RX + glutathione = an S-substituted glutathione + a halide anion + H(+). Its pathway is amino-acid degradation; L-phenylalanine degradation; acetoacetate and fumarate from L-phenylalanine: step 5/6. Functionally, catalyzes the glutathione dependent oxygenation of dichloroacetic acid to glyoxylic acid in vitro. Possesses low glutathione thioltransferase activity toward 4-hydroxynonenal (4-HNE). Has no glutathione thioltransferase activity with adrenochrome, phenethyl isothiocyanate (PEITC), 5-hydroperoxyeicosatetraenoic acid ((5S)-HpETE), prostaglandin A2 (PGA2) or 2-hydroxyethyldisulfide (HED). The protein is Probable maleylacetoacetate isomerase 1 (GstZ1) of Drosophila melanogaster (Fruit fly).